Here is a 454-residue protein sequence, read N- to C-terminus: Rhizobactin siderophore biosynthesis protein RhbE (454 aa).

7–13 (AGIGIGP) is a binding site for FAD.

Belongs to the lysine N(6)-hydroxylase/L-ornithine N(5)-oxygenase family. FAD is required as a cofactor.

Its pathway is siderophore biosynthesis; rhizobactin biosynthesis. The protein is Rhizobactin siderophore biosynthesis protein RhbE (rhbE) of Rhizobium meliloti (strain 1021) (Ensifer meliloti).